The following is a 777-amino-acid chain: Protein translocase subunit SecA (777 aa).

Residues glutamine 94, 112–116, and aspartate 501 contribute to the ATP site; that span reads GEGKT.

Belongs to the SecA family. As to quaternary structure, monomer and homodimer. Part of the essential Sec protein translocation apparatus which comprises SecA, SecYEG and auxiliary proteins SecDF. Other proteins may also be involved.

It localises to the cell membrane. Its subcellular location is the cytoplasm. The enzyme catalyses ATP + H2O + cellular proteinSide 1 = ADP + phosphate + cellular proteinSide 2.. Functionally, part of the Sec protein translocase complex. Interacts with the SecYEG preprotein conducting channel. Has a central role in coupling the hydrolysis of ATP to the transfer of proteins into and across the cell membrane, serving as an ATP-driven molecular motor driving the stepwise translocation of polypeptide chains across the membrane. In Mycobacterium avium (strain 104), this protein is Protein translocase subunit SecA.